The primary structure comprises 265 residues: MNRNPYSRYYVPGPSPWPFFVAISANGMAVGLILWLHRTPSFLLMGMSLVCMLLSTFSWWRDLIREGDIGFHTRFVIKSFRDCVALFILSEVMFFFTFFWTFFHNALSPSCELGMRWPPPGIRTPNPSSTSLFETGLLISSGLFVTQAHKSMRLKDYDVGPFIGLVVTIVCGTVFFLVQLREYYWNSYTIADSVYGSVFYLLTGFHGMHVVVGTIWLMVSLVRLWRGEFSSQRHFGFEACIWYWHFVDVVWVALWCLVYVWFGGW.

Helical transmembrane passes span 16–36, 40–60, 83–103, 159–179, 198–218, and 241–261; these read PWPFFVAISANGMAVGLILWL, PSFLLMGMSLVCMLLSTFSWW, CVALFILSEVMFFFTFFWTFF, VGPFIGLVVTIVCGTVFFLVQ, VFYLLTGFHGMHVVVGTIWLM, and IWYWHFVDVVWVALWCLVYVW.

This sequence belongs to the cytochrome c oxidase subunit 3 family. Component of the cytochrome c oxidase (complex IV, CIV), a multisubunit enzyme composed of a catalytic core of 3 subunits and several supernumerary subunits. The complex exists as a monomer or a dimer and forms supercomplexes (SCs) in the inner mitochondrial membrane with ubiquinol-cytochrome c oxidoreductase (cytochrome b-c1 complex, complex III, CIII).

It is found in the mitochondrion inner membrane. The enzyme catalyses 4 Fe(II)-[cytochrome c] + O2 + 8 H(+)(in) = 4 Fe(III)-[cytochrome c] + 2 H2O + 4 H(+)(out). In terms of biological role, component of the cytochrome c oxidase, the last enzyme in the mitochondrial electron transport chain which drives oxidative phosphorylation. The respiratory chain contains 3 multisubunit complexes succinate dehydrogenase (complex II, CII), ubiquinol-cytochrome c oxidoreductase (cytochrome b-c1 complex, complex III, CIII) and cytochrome c oxidase (complex IV, CIV), that cooperate to transfer electrons derived from NADH and succinate to molecular oxygen, creating an electrochemical gradient over the inner membrane that drives transmembrane transport and the ATP synthase. Cytochrome c oxidase is the component of the respiratory chain that catalyzes the reduction of oxygen to water. Electrons originating from reduced cytochrome c in the intermembrane space (IMS) are transferred via the dinuclear copper A center (CU(A)) of subunit 2 and heme A of subunit 1 to the active site in subunit 1, a binuclear center (BNC) formed by heme A3 and copper B (CU(B)). The BNC reduces molecular oxygen to 2 water molecules using 4 electrons from cytochrome c in the IMS and 4 protons from the mitochondrial matrix. The chain is Cytochrome c oxidase subunit 3 (COIII) from Mytilus edulis (Blue mussel).